A 267-amino-acid chain; its full sequence is Dihydropteroate synthase (267 aa).

The Pterin-binding domain maps to 1–251 (MTKTKIMGIL…NVELNAKLAK (251 aa)). Asn11 serves as a coordination point for Mg(2+). Residues Thr51, Asp84, Asn103, Asp167, Lys203, and 239-241 (RVH) contribute to the (7,8-dihydropterin-6-yl)methyl diphosphate site.

This sequence belongs to the DHPS family. Homodimer. Mg(2+) serves as cofactor.

It carries out the reaction (7,8-dihydropterin-6-yl)methyl diphosphate + 4-aminobenzoate = 7,8-dihydropteroate + diphosphate. The protein operates within cofactor biosynthesis; tetrahydrofolate biosynthesis; 7,8-dihydrofolate from 2-amino-4-hydroxy-6-hydroxymethyl-7,8-dihydropteridine diphosphate and 4-aminobenzoate: step 1/2. Its function is as follows. Catalyzes the condensation of para-aminobenzoate (pABA) with 6-hydroxymethyl-7,8-dihydropterin diphosphate (DHPt-PP) to form 7,8-dihydropteroate (H2Pte), the immediate precursor of folate derivatives. In Staphylococcus aureus (strain MSSA476), this protein is Dihydropteroate synthase (folP).